The chain runs to 342 residues: Isopentenyl-diphosphate delta-isomerase (342 aa).

11–12 (RK) serves as a coordination point for substrate. Residues serine 68, 69-71 (SMT), serine 99, and asparagine 127 each bind FMN. A substrate-binding site is contributed by 99–101 (SMR). Glutamine 162 provides a ligand contact to substrate. Glutamate 163 is a binding site for Mg(2+). FMN is bound by residues lysine 194, threonine 224, 274 to 276 (GLK), and 295 to 296 (AG).

It belongs to the IPP isomerase type 2 family. In terms of assembly, homooctamer. Dimer of tetramers. FMN is required as a cofactor. The cofactor is NADPH. Mg(2+) serves as cofactor.

The protein resides in the cytoplasm. The catalysed reaction is isopentenyl diphosphate = dimethylallyl diphosphate. Its function is as follows. Involved in the biosynthesis of isoprenoids. Catalyzes the 1,3-allylic rearrangement of the homoallylic substrate isopentenyl (IPP) to its allylic isomer, dimethylallyl diphosphate (DMAPP). The polypeptide is Isopentenyl-diphosphate delta-isomerase (Rickettsia canadensis (strain McKiel)).